The following is a 306-amino-acid chain: Beta-lactamase 1 (306 aa).

An N-terminal signal peptide occupies residues 1 to 43 (MKNKRMLKIGMCVGILGLSVTSLEAFTGGALQVEAKEKTGQVK). The Acyl-ester intermediate role is filled by Ser-89. Glu-185 functions as the Proton acceptor in the catalytic mechanism. 251–253 (KSG) serves as a coordination point for substrate.

The protein belongs to the class-A beta-lactamase family.

It carries out the reaction a beta-lactam + H2O = a substituted beta-amino acid. Functionally, this protein is a beta-lactamase with a substrate specificity for penicillins. In Bacillus mycoides, this protein is Beta-lactamase 1 (blaCI).